The chain runs to 363 residues: Phosphoserine aminotransferase (363 aa).

Arginine 42 contacts L-glutamate. Residues 76–77 (GR), tryptophan 102, threonine 156, aspartate 175, and glutamine 198 contribute to the pyridoxal 5'-phosphate site. Lysine 199 is subject to N6-(pyridoxal phosphate)lysine. 240 to 241 (NT) is a binding site for pyridoxal 5'-phosphate.

It belongs to the class-V pyridoxal-phosphate-dependent aminotransferase family. SerC subfamily. As to quaternary structure, homodimer. It depends on pyridoxal 5'-phosphate as a cofactor.

It localises to the cytoplasm. The enzyme catalyses O-phospho-L-serine + 2-oxoglutarate = 3-phosphooxypyruvate + L-glutamate. It carries out the reaction 4-(phosphooxy)-L-threonine + 2-oxoglutarate = (R)-3-hydroxy-2-oxo-4-phosphooxybutanoate + L-glutamate. The protein operates within amino-acid biosynthesis; L-serine biosynthesis; L-serine from 3-phospho-D-glycerate: step 2/3. Its pathway is cofactor biosynthesis; pyridoxine 5'-phosphate biosynthesis; pyridoxine 5'-phosphate from D-erythrose 4-phosphate: step 3/5. In terms of biological role, catalyzes the reversible conversion of 3-phosphohydroxypyruvate to phosphoserine and of 3-hydroxy-2-oxo-4-phosphonooxybutanoate to phosphohydroxythreonine. The polypeptide is Phosphoserine aminotransferase (Shewanella baltica (strain OS185)).